Consider the following 410-residue polypeptide: Thyroid hormone receptor alpha (410 aa).

A disordered region spans residues 1-32 (MEQKPSKVECGSDPEESSTRSPDGKRKRKNGQ). The tract at residues 1–52 (MEQKPSKVECGSDPEESSTRSPDGKRKRKNGQCSLKTSMSGYIPSYLDKDEQ) is modulating. 8 residues coordinate Zn(2+): cysteine 53, cysteine 56, cysteine 70, cysteine 73, cysteine 91, cysteine 97, cysteine 107, and cysteine 110. NR C4-type zinc fingers lie at residues 53–73 (CVVC…CEGC) and 91–115 (CKYD…FKKC). Residues 53–127 (CVVCGDKATG…VGMAMDLVLD (75 aa)) constitute a DNA-binding region (nuclear receptor). In terms of domain architecture, NR LBD spans 163–407 (EEWDLIHVAT…PPLFLEVFED (245 aa)). Positions 228 and 277 each coordinate 3,3',5-triiodo-L-thyronine.

The protein belongs to the nuclear hormone receptor family. NR1 subfamily. Binds DNA as a dimer; homodimer and heterodimer with RXRB. Interacts with NCOA3 and NCOA6 coactivators, leading to a strong increase of transcription of target genes. Probably interacts with SFPQ. Interacts with C1D. Interacts with AKAP13. Interacts with TP53INP2. Interacts with PER2. Interacts with TACC1. The interaction with isoform alpha-1, but not alpha-2, is decreased in the presence of thyroid hormone T3.

It is found in the nucleus. It localises to the cytoplasm. Functionally, nuclear hormone receptor that can act as a repressor or activator of transcription. High affinity receptor for thyroid hormones, including triiodothyronine and thyroxine. This is Thyroid hormone receptor alpha (THRA) from Ovis aries (Sheep).